Consider the following 1129-residue polypeptide: Phospholipid-transporting ATPase 11C (1129 aa).

The Cytoplasmic segment spans residues 1–83; the sequence is MFRRTLNRLC…IIFLVQVTVD (83 aa). Residues 84–104 traverse the membrane as a helical segment; sequence TPTSPVTSGLPLFFVITVTAI. Residues 105-287 lie on the Extracellular side of the membrane; that stretch reads KQGYEDWLRH…SQKCSAVEKS (183 aa). A helical transmembrane segment spans residues 288–308; that stretch reads INAFLIVYLFILLTKAAVCTT. Topologically, residues 309 to 343 are cytoplasmic; that stretch reads LKYVWQSSPYNDEPWYNQKTQKERETFQVLKMFTD. The chain crosses the membrane as a helical span at residues 344–364; that stretch reads FLSFMVLFNFIIPVSMYVTVE. Residues 365 to 876 are Extracellular-facing; it reads MQKFLGSFFI…YVRIAHLVQY (512 aa). Catalysis depends on aspartate 409, which acts as the 4-aspartylphosphate intermediate. The ATP site is built by aspartate 409, lysine 410, and threonine 411. A Mg(2+)-binding site is contributed by aspartate 409. Threonine 411 is a Mg(2+) binding site. At serine 442 the chain carries Phosphoserine. ATP is bound by residues glutamate 498, phenylalanine 540, lysine 563, and arginine 594. Residues 607 to 643 are a coiled coil; that stretch reads DFERINAQLVEAKMALQDREEKLEKVFDEIETNMNLI. Threonine 674, glycine 675, and aspartate 676 together coordinate ATP. Residues 695–726 adopt a coiled-coil conformation; sequence TELLELTTKTIEESERKEDRLHELLIEYRKKL. The ATP site is built by arginine 789 and lysine 795. Aspartate 816 is a binding site for Mg(2+). Residues asparagine 819 and aspartate 820 each coordinate ATP. Mg(2+) is bound at residue aspartate 820. The helical transmembrane segment at 877 to 897 threads the bilayer; sequence FFYKNLCFILPQFLYQFFCGF. At 898–905 the chain is on the cytoplasmic side; that stretch reads SQQPLYDA. Residues 906–926 traverse the membrane as a helical segment; that stretch reads AYLTMYNICFTSLPILAYSLL. At 927-952 the chain is on the extracellular side; the sequence is EQHINIDTLTADPRLYMKITGNAMLQ. Residues 953–973 traverse the membrane as a helical segment; it reads LGPFLHWTFLAAFEGTVFFFG. The Cytoplasmic segment spans residues 974–988; that stretch reads TYFLFQTSSLEDNGK. The chain crosses the membrane as a helical span at residues 989 to 1009; that stretch reads IYGNWTFGTIVFTVLVFTVTL. Over 1010-1023 the chain is Extracellular; sequence KLALDTRFWTWINH. Residues 1024–1044 form a helical membrane-spanning segment; sequence FVIWGSLAFYVFFSFFWGGII. Topologically, residues 1045–1066 are cytoplasmic; the sequence is WPFLKQQRMYFVFAQMLCSVST. Residues 1067-1087 form a helical membrane-spanning segment; that stretch reads WLAIILLIFISLFPEILLIVV. The Extracellular portion of the chain corresponds to 1088–1129; sequence KNVRRRSARRNLSCRRASDSLSARPSVRPLLLRTFSDESNIL. Residues serine 1105, serine 1113, and serine 1123 each carry the phosphoserine modification. The Di-leucine motif signature appears at 1113–1118; that stretch reads SVRPLL.

The protein belongs to the cation transport ATPase (P-type) (TC 3.A.3) family. Type IV subfamily. As to quaternary structure, component of a P4-ATPase flippase complex which consists of a catalytic alpha subunit ATP11C and an accessory beta subunit TMEM30A. It depends on Mg(2+) as a cofactor. In terms of processing, proteolytically cleaved by CASP3, CASP6 and CASP7. Phosphorylated at Ser-1113 likely by PRKCA; this creates a functional di-leucine motif that is sufficient for endocytosis. In terms of tissue distribution, widely expressed. Expressed in retina, brain, liver and testes (at protein level). Expressed in lung, bone marrow, lymph nodes, prostate, ovary and uterus. Expressed in fetus.

It is found in the cell membrane. Its subcellular location is the endoplasmic reticulum membrane. The protein resides in the early endosome membrane. It localises to the recycling endosome membrane. The catalysed reaction is ATP + H2O + phospholipidSide 1 = ADP + phosphate + phospholipidSide 2.. It catalyses the reaction a 1,2-diacyl-sn-glycero-3-phospho-L-serine(out) + ATP + H2O = a 1,2-diacyl-sn-glycero-3-phospho-L-serine(in) + ADP + phosphate + H(+). The enzyme catalyses a 1,2-diacyl-sn-glycero-3-phosphoethanolamine(out) + ATP + H2O = a 1,2-diacyl-sn-glycero-3-phosphoethanolamine(in) + ADP + phosphate + H(+). In terms of biological role, catalytic component of a P4-ATPase flippase complex which catalyzes the hydrolysis of ATP coupled to the transport of aminophospholipids, phosphatidylserines (PS) and phosphatidylethanolamines (PE), from the outer to the inner leaflet of the plasma membrane. Major PS-flippase in immune cell subsets. In erythrocyte plasma membrane, it is required to maintain PS in the inner leaflet preventing its exposure on the surface. This asymmetric distribution is critical for the survival of erythrocytes in circulation since externalized PS is a phagocytic signal for erythrocyte clearance by splenic macrophages. Required for B cell differentiation past the pro-B cell stage. Seems to mediate PS flipping in pro-B cells. May be involved in the transport of cholestatic bile acids. This is Phospholipid-transporting ATPase 11C from Mus musculus (Mouse).